The sequence spans 407 residues: Multifunctional CCA protein (407 aa).

ATP contacts are provided by glycine 8 and arginine 11. CTP-binding residues include glycine 8 and arginine 11. Residues aspartate 21 and aspartate 23 each coordinate Mg(2+). Positions 91, 137, and 140 each coordinate ATP. CTP contacts are provided by arginine 91, arginine 137, and arginine 140. One can recognise an HD domain in the interval 228-329; that stretch reads TGVHALMALA…VALFDRVDAW (102 aa).

The protein belongs to the tRNA nucleotidyltransferase/poly(A) polymerase family. Bacterial CCA-adding enzyme type 1 subfamily. In terms of assembly, monomer. Can also form homodimers and oligomers. Requires Mg(2+) as cofactor. It depends on Ni(2+) as a cofactor.

The enzyme catalyses a tRNA precursor + 2 CTP + ATP = a tRNA with a 3' CCA end + 3 diphosphate. It catalyses the reaction a tRNA with a 3' CCA end + 2 CTP + ATP = a tRNA with a 3' CCACCA end + 3 diphosphate. Catalyzes the addition and repair of the essential 3'-terminal CCA sequence in tRNAs without using a nucleic acid template. Adds these three nucleotides in the order of C, C, and A to the tRNA nucleotide-73, using CTP and ATP as substrates and producing inorganic pyrophosphate. tRNA 3'-terminal CCA addition is required both for tRNA processing and repair. Also involved in tRNA surveillance by mediating tandem CCA addition to generate a CCACCA at the 3' terminus of unstable tRNAs. While stable tRNAs receive only 3'-terminal CCA, unstable tRNAs are marked with CCACCA and rapidly degraded. In Erwinia tasmaniensis (strain DSM 17950 / CFBP 7177 / CIP 109463 / NCPPB 4357 / Et1/99), this protein is Multifunctional CCA protein.